Reading from the N-terminus, the 182-residue chain is Glutathione-regulated potassium-efflux system ancillary protein KefG (182 aa).

The protein belongs to the NAD(P)H dehydrogenase (quinone) family. KefG subfamily. In terms of assembly, interacts with KefB.

The protein resides in the cell inner membrane. The catalysed reaction is a quinone + NADH + H(+) = a quinol + NAD(+). It carries out the reaction a quinone + NADPH + H(+) = a quinol + NADP(+). Regulatory subunit of a potassium efflux system that confers protection against electrophiles. Required for full activity of KefB. In Yersinia pseudotuberculosis serotype O:1b (strain IP 31758), this protein is Glutathione-regulated potassium-efflux system ancillary protein KefG.